An 808-amino-acid chain; its full sequence is Glycerol-3-phosphate acyltransferase (808 aa).

The HXXXXD motif signature appears at 306-311 (HRSHMD).

This sequence belongs to the GPAT/DAPAT family.

The protein localises to the cell inner membrane. The enzyme catalyses sn-glycerol 3-phosphate + an acyl-CoA = a 1-acyl-sn-glycero-3-phosphate + CoA. It functions in the pathway phospholipid metabolism; CDP-diacylglycerol biosynthesis; CDP-diacylglycerol from sn-glycerol 3-phosphate: step 1/3. The chain is Glycerol-3-phosphate acyltransferase from Vibrio parahaemolyticus serotype O3:K6 (strain RIMD 2210633).